The chain runs to 274 residues: uncharacterized protein (274 aa).

This is an uncharacterized protein from Rhodobacter capsulatus (Rhodopseudomonas capsulata).